A 1341-amino-acid polypeptide reads, in one-letter code: Subtilisin-like protease 2 (1341 aa).

Residues methionine 1 to tyrosine 18 form the signal peptide. Residues lysine 19 to leucine 686 constitute a propeptide, inhibition peptide. 2 disordered regions span residues glutamate 85–lysine 107 and alanine 143–asparagine 171. N-linked (GlcNAc...) asparagine glycans are attached at residues asparagine 165, asparagine 343, asparagine 449, asparagine 453, and asparagine 492. Residues lysine 415–serine 474 form a disordered region. Positions asparagine 430–serine 474 are enriched in low complexity. The tract at residues isoleucine 499–lysine 530 is disordered. The segment covering asparagine 502 to threonine 515 has biased composition (basic and acidic residues). Over residues lysine 517–lysine 530 the composition is skewed to low complexity. N-linked (GlcNAc...) asparagine glycosylation is found at asparagine 550, asparagine 641, and asparagine 728. Residues asparagine 687–histidine 1136 lie on the Extracellular side of the membrane. The Peptidase S8 domain maps to threonine 726 to valine 1019. Catalysis depends on charge relay system residues aspartate 754 and histidine 797. N-linked (GlcNAc...) asparagine glycans are attached at residues asparagine 820, asparagine 856, asparagine 892, and asparagine 950. The active-site Charge relay system is serine 960. Asparagine 1009 and asparagine 1105 each carry an N-linked (GlcNAc...) asparagine glycan. The helical transmembrane segment at tyrosine 1137–isoleucine 1157 threads the bilayer. The Cytoplasmic segment spans residues tyrosine 1158–lysine 1341.

The protein belongs to the peptidase S8 family. In terms of processing, proteolytically cleaved at the N-terminus to generate a 74kDa intermediate which is further processed into a 72kDa form. The first maturation cleavage is autocatalytic, occurs in the ER and is necessary for the subsequent SUB2 trafficking to the microneme. The second cleavage may be mediated by PMX/plasmepsin X.

It is found in the cell membrane. The protein localises to the cytoplasmic vesicle. The protein resides in the secretory vesicle. Its subcellular location is the microneme membrane. The enzyme catalyses Hydrolysis of proteins with broad specificity for peptide bonds, and a preference for a large uncharged residue in P1. Hydrolyzes peptide amides.. Its activity is regulated as follows. Activation may be calcium-dependent. Inhibited by the non-covalent interaction with the cleaved propeptide. Serine protease which plays an essential role in the shedding of AMA1, MSP1 and MSP7 from the surface of the invading merozoite; this step is essential for productive invasion and the release of the adhesion between the erythrocyte and the merozoite. May cleave TRAMP/PTTRAMP, thereby shedding TRAMP from the merozoite surface during erythrocyte invasion. The polypeptide is Subtilisin-like protease 2 (Plasmodium falciparum (isolate 3D7)).